A 4471-amino-acid chain; its full sequence is Dynein axonemal heavy chain 10 (4471 aa).

The tract at residues 1–1793 is stem; it reads MVPEEVEVEI…NIRQCTGTFG (1793 aa). The disordered stretch occupies residues 46–65; it reads TESLGQPLNREDEEMDKEIS. Coiled-coil stretches lie at residues 203–223, 602–622, 1071–1106, and 1217–1245; these read NVQKFASNIQRTMQQLEGEIK, QEVKQKYLEVGRTMKEYEDRK, KLLNESAKEELYNLHEEMEHLAKNLRKIPNTLEDLK, and VELLGVYERELARHEKSRQELANAEKLFD. N1074 carries N-linked (GlcNAc...) asparagine glycosylation. A TPR 1 repeat occupies 1221 to 1254; sequence GVYERELARHEKSRQELANAEKLFDLPITMYPEL. AAA stretches follow at residues 1794 to 2015, 2075 to 2294, 2417 to 2665, and 2765 to 3014; these read YGYE…VLVM, DAVE…VIVE, IHAP…VFNG, and EYNE…LRRS. The GPAGTGKT motif motif lies at 1832 to 1839; that stretch reads GPAGTGKT. 1832–1839 serves as a coordination point for ATP; sequence GPAGTGKT. A CFDEFNR motif motif is present at residues 1882-1888; that stretch reads CFDEFNR. ATP contacts are provided by residues 2113 to 2120 and 2455 to 2462; these read GPTRGGKS and GESGTSKT. TPR repeat units lie at residues 2736-2769 and 2771-2797; these read MALHEGEPRIYEDIQDYEAAKALFQEILEEYNES and TKMNLVLFDDALEHLTRVHRIIRMDRG. The stretch at 2747-2770 forms a coiled coil; sequence EDIQDYEAAKALFQEILEEYNESN. 2803–2810 contacts ATP; sequence GVGGSGKQ. The tract at residues 3029-3313 is stalk; sequence YSKLLDEKTQ…QKLQEEAEIM (285 aa). Coiled coils occupy residues 3045-3131, 3257-3327, and 3567-3638; these read KRLD…LAEV, KREK…ISGL, and ERRE…EKTA. An AAA 5 region spans residues 3399–3629; the sequence is LTDDVEISRW…TKSKATEVSE (231 aa). A TPR 4 repeat occupies 3802–3837; it reads WQEWYDLDSLEQFPVPLGYDNNITPFQKLLILRCFR. The interval 3845–4062 is AAA 6; sequence VTDYVTVTMG…FQVCMEILNT (218 aa). One copy of the TPR 5 repeat lies at 4074-4108; the sequence is RIPWGSLKYLIGEVMYGGRAIDSFDRRILTIYMDE. A coiled-coil region spans residues 4235–4260; it reads LLQELERFNKLVVRMTKSLAELQRAL.

The protein belongs to the dynein heavy chain family. In terms of assembly, consists of at least two heavy chains and a number of intermediate and light chains. In terms of tissue distribution, expressed primarily in trachea and testis, 2 tissues containing axonemal structures. Also expressed in brain but not in adult heart.

Its subcellular location is the cytoplasm. It localises to the cytoskeleton. The protein localises to the cilium axoneme. Functionally, force generating protein of respiratory cilia. Produces force towards the minus ends of microtubules. Dynein has ATPase activity; the force-producing power stroke is thought to occur on release of ADP. Involved in sperm motility; implicated in sperm flagellar assembly. Probable inner arm dynein heavy chain. The chain is Dynein axonemal heavy chain 10 (DNAH10) from Homo sapiens (Human).